A 241-amino-acid polypeptide reads, in one-letter code: Ribonuclease PH (241 aa).

Phosphate contacts are provided by residues Arg-89 and 127-129 (GTR).

It belongs to the RNase PH family. Homohexameric ring arranged as a trimer of dimers.

It carries out the reaction tRNA(n+1) + phosphate = tRNA(n) + a ribonucleoside 5'-diphosphate. Phosphorolytic 3'-5' exoribonuclease that plays an important role in tRNA 3'-end maturation. Removes nucleotide residues following the 3'-CCA terminus of tRNAs; can also add nucleotides to the ends of RNA molecules by using nucleoside diphosphates as substrates, but this may not be physiologically important. Probably plays a role in initiation of 16S rRNA degradation (leading to ribosome degradation) during starvation. The chain is Ribonuclease PH from Xylella fastidiosa (strain M23).